The sequence spans 235 residues: Ribonuclease PH (235 aa).

Phosphate is bound by residues Arg-86 and 124-126 (GTR).

This sequence belongs to the RNase PH family. Homohexameric ring arranged as a trimer of dimers.

It carries out the reaction tRNA(n+1) + phosphate = tRNA(n) + a ribonucleoside 5'-diphosphate. Functionally, phosphorolytic 3'-5' exoribonuclease that plays an important role in tRNA 3'-end maturation. Removes nucleotide residues following the 3'-CCA terminus of tRNAs; can also add nucleotides to the ends of RNA molecules by using nucleoside diphosphates as substrates, but this may not be physiologically important. Probably plays a role in initiation of 16S rRNA degradation (leading to ribosome degradation) during starvation. In Francisella tularensis subsp. holarctica (strain FTNF002-00 / FTA), this protein is Ribonuclease PH.